A 282-amino-acid polypeptide reads, in one-letter code: Pantothenate synthetase (282 aa).

Residue 30-37 coordinates ATP; it reads MGYYHAGH. Catalysis depends on histidine 37, which acts as the Proton donor. Glutamine 61 contacts (R)-pantoate. Glutamine 61 is a beta-alanine binding site. 147 to 150 contributes to the ATP binding site; sequence GQKD. Glutamine 153 contributes to the (R)-pantoate binding site. ATP is bound by residues valine 176 and 184-187; that span reads LSSR.

Belongs to the pantothenate synthetase family. Homodimer.

The protein resides in the cytoplasm. It catalyses the reaction (R)-pantoate + beta-alanine + ATP = (R)-pantothenate + AMP + diphosphate + H(+). Its pathway is cofactor biosynthesis; (R)-pantothenate biosynthesis; (R)-pantothenate from (R)-pantoate and beta-alanine: step 1/1. Functionally, catalyzes the condensation of pantoate with beta-alanine in an ATP-dependent reaction via a pantoyl-adenylate intermediate. The polypeptide is Pantothenate synthetase (Desulfovibrio desulfuricans (strain ATCC 27774 / DSM 6949 / MB)).